The sequence spans 222 residues: Glutathione S-transferase A3 (222 aa).

Residue A2 is modified to N-acetylalanine. In terms of domain architecture, GST N-terminal spans 3-83; the sequence is GKPKLHYFNG…YIASKYNLYG (81 aa). An N6-succinyllysine modification is found at K4. Glutathione contacts are provided by residues Y9, R45, 54–55, and 67–68; these read QV and QT. The region spanning 85–207 is the GST C-terminal domain; it reads DIKERALIDM…LQPGSPRKPP (123 aa).

This sequence belongs to the GST superfamily. Alpha family. In terms of assembly, homodimer.

It localises to the cytoplasm. The catalysed reaction is RX + glutathione = an S-substituted glutathione + a halide anion + H(+). It catalyses the reaction androst-5-ene-3,17-dione = androst-4-ene-3,17-dione. The enzyme catalyses pregn-5-ene-3,20-dione = progesterone. Functionally, conjugation of reduced glutathione to a wide number of exogenous and endogenous hydrophobic electrophiles. Catalyzes isomerization reactions that contribute to the biosynthesis of steroid hormones. Efficiently catalyze obligatory double-bond isomerizations of delta(5)-androstene-3,17-dione and delta(5)-pregnene-3,20-dione, precursors to testosterone and progesterone, respectively. Has substantial activity toward aflatoxin B1-8,9-epoxide. This chain is Glutathione S-transferase A3, found in Homo sapiens (Human).